A 199-amino-acid polypeptide reads, in one-letter code: Elongation factor Ts (199 aa).

The involved in Mg(2+) ion dislocation from EF-Tu stretch occupies residues 81–84 (TDFV).

Belongs to the EF-Ts family.

It is found in the cytoplasm. Its function is as follows. Associates with the EF-Tu.GDP complex and induces the exchange of GDP to GTP. It remains bound to the aminoacyl-tRNA.EF-Tu.GTP complex up to the GTP hydrolysis stage on the ribosome. This chain is Elongation factor Ts, found in Thermotoga petrophila (strain ATCC BAA-488 / DSM 13995 / JCM 10881 / RKU-1).